Here is a 380-residue protein sequence, read N- to C-terminus: Acetylornithine deacetylase (380 aa).

Position 79 (His-79) interacts with Zn(2+). Asp-81 is a catalytic residue. Zn(2+) is bound at residue Asp-109. Glu-139 is an active-site residue. Residues Glu-140, Glu-164, and His-351 each contribute to the Zn(2+) site.

Belongs to the peptidase M20A family. ArgE subfamily. As to quaternary structure, homodimer. It depends on Zn(2+) as a cofactor. Co(2+) serves as cofactor. Requires glutathione as cofactor.

The protein resides in the cytoplasm. It carries out the reaction N(2)-acetyl-L-ornithine + H2O = L-ornithine + acetate. It functions in the pathway amino-acid biosynthesis; L-arginine biosynthesis; L-ornithine from N(2)-acetyl-L-ornithine (linear): step 1/1. In terms of biological role, catalyzes the hydrolysis of the amide bond of N(2)-acetylated L-amino acids. Cleaves the acetyl group from N-acetyl-L-ornithine to form L-ornithine, an intermediate in L-arginine biosynthesis pathway, and a branchpoint in the synthesis of polyamines. This is Acetylornithine deacetylase from Myxococcus xanthus.